A 224-amino-acid polypeptide reads, in one-letter code: Ribose-5-phosphate isomerase A (224 aa).

Substrate contacts are provided by residues 26–29 (TGST), 82–85 (DGAD), and 95–98 (KGGG). E104 serves as the catalytic Proton acceptor. K122 provides a ligand contact to substrate.

Belongs to the ribose 5-phosphate isomerase family. As to quaternary structure, homodimer.

It catalyses the reaction aldehydo-D-ribose 5-phosphate = D-ribulose 5-phosphate. It participates in carbohydrate degradation; pentose phosphate pathway; D-ribose 5-phosphate from D-ribulose 5-phosphate (non-oxidative stage): step 1/1. Its function is as follows. Catalyzes the reversible conversion of ribose-5-phosphate to ribulose 5-phosphate. In Streptococcus suis (strain 98HAH33), this protein is Ribose-5-phosphate isomerase A.